Here is a 119-residue protein sequence, read N- to C-terminus: Odin profilin (119 aa).

This sequence belongs to the Asgard profilin family.

The protein resides in the cytoplasm. It is found in the cytoskeleton. Inhibition of rabbit actin polymerization is reduced by phosphatidylinositol-(4,5)-P2(1,2-dipalmitoyl), a soluble form of the phospholipid phosphatidylinositol, suggesting an unknown lipid might regulate actin-profilin interaction in vivo. Binds to actin and affects the structure of the cytoskeleton. At high concentrations inhibits spontaneous rabbit actin nucleation. This strongly suggests this archaea has a profilin-regulated actin system, and actin-type genes can be identified in this organism. This chain is Odin profilin, found in Odinarchaeota yellowstonii (strain LCB_4).